Consider the following 1221-residue polypeptide: MSRGMTTEGASLTAAASSSASTWLTESTPSTPSSSGSSYPALSTFSSCSNSASSPDEADPMSEMSPKISVASMILLKDMEEFLHLYVSSANMHPSNFVRHHIESFDDMLWNEFPAMVAREKPVSVKGYRVKFGTVRYEPPCPDGKPWEKLTPAMARRTDATYHSAAVCDLTVTDPKGLETVYPRLELCKIPVMVGSAVCWTRTEGSPLPGECPSDPGGYFIIKGKERVVVPHIRPAYDQPCVYKNGDGWLCEFRSVNRETRQTVLVQAKTDCRRKLEFSLPYIKQYVPVGLVFKALGKTAREAVAMCGLGSFLGDEVSCRTVHHQSMAALLMEQHASAPEDPVADLAKHVPDGRSVYSKQAEGAKQAKYADRASVEEDRNAKGSKEDYVRHVLAGEIFLHGGDAAEHLGWMVKRMADAASGIGTCTDRDDLANKRVDATGPLIAFLLDGLLKQYVKLFVKSAGCQKNLCPYTVLQNSMVMTNSLHMCFATGNWTVKRLGPPSYVRVGVSQVLSNNNYGARVSHLRRIMHAVSFRGKNIRMRQLHSSHYGFLCPYETPEGEKVGIVLNMAEGAGFSLETPREVVLATVRLGKGLPGFFEGAPARLAWSGAAGSASVDVDGVLCGVTGDPVGFVREARLCLPGVSVVWKKVEREIHLLGCQGRFVRRVLDPEGIRGSGYDSPPAPEERDIEMDPAPSSSPSDSLPCPPGVYVCAQELSVCSLGDGEYADPPASEILTDAMSSVIPFYDHTQSPRNAYQSNMGKQAIGFPAVNCSDRYDATLHRLDYPQKSLVDSRSVKRLGFDEMAHGALPVVAIMTAGGFNQEDSVVLNASSLDRGLFSCVTYRTVSCADKRRTKYDSEVVCLPDWGLRNREWDYDLLGDDGVIDPSCAGALARRVEGKRKAAKRPAGQRTGGGPAGLCDALWIPAGTVLVGKVSHSLGPGGNPMRRDVSLTVKQSEEGYLDRVTVDVDSDGKKLVKVRLRTPRHPEMGDKFASFTAQKGTCGAVLTQEDMPFDKDGVVPDLIINPHAFPSRMTVNYLLQMCFGTAACKLGKTYDATAFEREDVVRDIAEAAKEAGIDCWDSVLHSGSTGRRLPTKIFMAPCPYQRLKHMVSGKMHSRTHGPTDALTRQPVAGRSREGGIKIGEMEQWCKISHGASESLKESVYDMSDKYEVPVCKECGRISDHFEYCRMCDATDMSLVKLPYTTKILFQELRSIGISIAFK.

Composition is skewed to low complexity over residues 1-54 and 692-701; these read MSRG…SASS and PAPSSSPSDS. Disordered stretches follow at residues 1-63 and 673-701; these read MSRG…PMSE and RGSGYDSPPAPEERDIEMDPAPSSSPSDS. Residue Asp823 participates in Mg(2+) binding. Residues Cys1174, Cys1177, Cys1187, and Cys1190 each coordinate Zn(2+). The C4-type zinc finger occupies 1174-1190; sequence CKECGRISDHFEYCRMC.

The protein belongs to the RNA polymerase beta chain family.

It catalyses the reaction RNA(n) + a ribonucleoside 5'-triphosphate = RNA(n+1) + diphosphate. Component of the DNA-dependent RNA polymerase that catalyzes the transcription of DNA into RNA using the four ribonucleoside triphosphates as substrates. Second largest component of RNA polymerase II which synthesizes mRNA precursors and many functional non-coding RNAs. Proposed to contribute to the polymerase catalytic activity and forms the polymerase active center together with the largest subunit. This Dryophytes versicolor (chameleon treefrog) protein is Putative DNA-directed RNA polymerase II subunit RPB2 homolog.